Consider the following 538-residue polypeptide: Chaperonin GroEL (538 aa).

ATP-binding positions include 30–33 (TLGP), 87–91 (DGTTT), G415, 479–481 (DAA), and D495.

The protein belongs to the chaperonin (HSP60) family. As to quaternary structure, forms a cylinder of 14 subunits composed of two heptameric rings stacked back-to-back. Interacts with the co-chaperonin GroES.

The protein resides in the cytoplasm. The enzyme catalyses ATP + H2O + a folded polypeptide = ADP + phosphate + an unfolded polypeptide.. Functionally, together with its co-chaperonin GroES, plays an essential role in assisting protein folding. The GroEL-GroES system forms a nano-cage that allows encapsulation of the non-native substrate proteins and provides a physical environment optimized to promote and accelerate protein folding. The chain is Chaperonin GroEL from Dictyoglomus turgidum (strain DSM 6724 / Z-1310).